Reading from the N-terminus, the 304-residue chain is N-acetyl-D-glucosamine kinase (304 aa).

Residues 4 to 11 and 133 to 140 contribute to the ATP site; these read GFDIGGTK and GFGGGLIF. Residues His-157, Cys-178, Cys-180, and Cys-185 each contribute to the Zn(2+) site.

This sequence belongs to the ROK (NagC/XylR) family. NagK subfamily.

The catalysed reaction is N-acetyl-D-glucosamine + ATP = N-acetyl-D-glucosamine 6-phosphate + ADP + H(+). It participates in cell wall biogenesis; peptidoglycan recycling. In terms of biological role, catalyzes the phosphorylation of N-acetyl-D-glucosamine (GlcNAc) derived from cell-wall degradation, yielding GlcNAc-6-P. In Pasteurella multocida (strain Pm70), this protein is N-acetyl-D-glucosamine kinase.